The primary structure comprises 120 residues: uncharacterized protein (120 aa).

Transmembrane regions (helical) follow at residues 20-39 (FFWP…CYLL), 52-71 (GSSL…LFSI), and 86-108 (ILVV…SIIG).

Its subcellular location is the cell membrane. This is an uncharacterized protein from Pasteurella multocida (strain Pm70).